Here is a 693-residue protein sequence, read N- to C-terminus: Protein FAM13A (693 aa).

Serine 19 is subject to Phosphoserine. Disordered stretches follow at residues 56-89 and 136-233; these read SNAG…KKQD and RSKP…VPDM. Residues 69 to 78 show a composition bias toward polar residues; it reads GPSSASSIPT. Over residues 159 to 171 the composition is skewed to low complexity; the sequence is LSMESLSSMQSQE. Positions 184 to 197 are enriched in basic and acidic residues; sequence ESKEIERGGRDTQH. Residues serine 267 and serine 287 each carry the phosphoserine modification. Disordered stretches follow at residues 302–331 and 396–424; these read DTEV…DEQE and ISEE…EKED. Serine 397 carries the post-translational modification Phosphoserine. Threonine 402 is subject to Phosphothreonine. Polar residues predominate over residues 408–418; that stretch reads RSNTLPKSFGS.

It belongs to the FAM13 family. In terms of assembly, interacts with ANXA2. In terms of tissue distribution, expressed in the mammary gland, with similar levels at all stages of development, including pregnancy, lactation and involution.

In terms of biological role, (Microbial infection) Plays a role in the clearance of Pseudomonas aeruginosa by macrophages. In complex with ANXA2, promotes activation of Rho GTPases following P.aeruginosa infection. The protein is Protein FAM13A (Fam13a) of Mus musculus (Mouse).